The sequence spans 444 residues: uncharacterized protein (444 aa).

Lys268 is subject to N6-(pyridoxal phosphate)lysine.

Belongs to the class-III pyridoxal-phosphate-dependent aminotransferase family. It depends on pyridoxal 5'-phosphate as a cofactor.

This is an uncharacterized protein from Bacillus subtilis (strain 168).